Consider the following 445-residue polypeptide: Membrane protein insertase YidC (445 aa).

5 helical membrane passes run 6 to 26, 248 to 268, 313 to 333, 352 to 372, and 388 to 408; these read VVAI…PIKV, FGWA…PLYH, ASGC…WSVI, LSAG…VASY, and GIIM…GLFL.

This sequence belongs to the OXA1/ALB3/YidC family. Type 1 subfamily. As to quaternary structure, interacts with the Sec translocase complex via SecD. Specifically interacts with transmembrane segments of nascent integral membrane proteins during membrane integration.

Its subcellular location is the cell inner membrane. Functionally, required for the insertion and/or proper folding and/or complex formation of integral membrane proteins into the membrane. Involved in integration of membrane proteins that insert both dependently and independently of the Sec translocase complex, as well as at least some lipoproteins. Aids folding of multispanning membrane proteins. The sequence is that of Membrane protein insertase YidC from Thermotoga maritima (strain ATCC 43589 / DSM 3109 / JCM 10099 / NBRC 100826 / MSB8).